The sequence spans 293 residues: Undecaprenyl-diphosphatase (293 aa).

6 consecutive transmembrane segments (helical) span residues 74-94 (VLVF…AGVF), 107-127 (WMII…KDLI), 134-154 (MWIT…AEKM), 209-229 (FLLA…DAFA), 243-263 (VGTL…MKFV), and 271-291 (FAAY…LGML).

The protein belongs to the UppP family.

The protein localises to the cell membrane. It catalyses the reaction di-trans,octa-cis-undecaprenyl diphosphate + H2O = di-trans,octa-cis-undecaprenyl phosphate + phosphate + H(+). In terms of biological role, catalyzes the dephosphorylation of undecaprenyl diphosphate (UPP). Confers resistance to bacitracin. The protein is Undecaprenyl-diphosphatase of Corynebacterium glutamicum (strain R).